A 169-amino-acid polypeptide reads, in one-letter code: NADH-quinone oxidoreductase subunit B (169 aa).

4 residues coordinate [4Fe-4S] cluster: Cys-42, Cys-43, Cys-107, and Cys-136.

The protein belongs to the complex I 20 kDa subunit family. NDH-1 is composed of 14 different subunits. Subunits NuoB, C, D, E, F, and G constitute the peripheral sector of the complex. The cofactor is [4Fe-4S] cluster.

Its subcellular location is the cell inner membrane. It catalyses the reaction a quinone + NADH + 5 H(+)(in) = a quinol + NAD(+) + 4 H(+)(out). Its function is as follows. NDH-1 shuttles electrons from NADH, via FMN and iron-sulfur (Fe-S) centers, to quinones in the respiratory chain. The immediate electron acceptor for the enzyme in this species is believed to be ubiquinone. Couples the redox reaction to proton translocation (for every two electrons transferred, four hydrogen ions are translocated across the cytoplasmic membrane), and thus conserves the redox energy in a proton gradient. The protein is NADH-quinone oxidoreductase subunit B of Wolinella succinogenes (strain ATCC 29543 / DSM 1740 / CCUG 13145 / JCM 31913 / LMG 7466 / NCTC 11488 / FDC 602W) (Vibrio succinogenes).